The following is a 237-amino-acid chain: Redox-sensing transcriptional repressor Rex (237 aa).

The segment at residues 45-84 (LYYRELHRLLAAGESSTNSRDLGAMVNVSPAVVRRDLSSI) is a DNA-binding region (H-T-H motif). 119–124 (GVGSLG) provides a ligand contact to NAD(+).

This sequence belongs to the transcriptional regulatory Rex family. As to quaternary structure, homodimer.

It is found in the cytoplasm. Its function is as follows. Modulates transcription in response to changes in cellular NADH/NAD(+) redox state. The polypeptide is Redox-sensing transcriptional repressor Rex (Rhodopirellula baltica (strain DSM 10527 / NCIMB 13988 / SH1)).